Reading from the N-terminus, the 1169-residue chain is Pesticidal crystal protein Cry8Ba (1169 aa).

Positions 1-26 (MSPNNQNEYEIIDATPSTSVSNDSNR) are disordered. The segment covering 15-25 (TPSTSVSNDSN) has biased composition (polar residues).

The protein belongs to the delta endotoxin family.

Promotes colloidosmotic lysis by binding to the midgut epithelial cells of insects. Active on various scarabaeid beetles. This Bacillus thuringiensis serovar kumamotoensis protein is Pesticidal crystal protein Cry8Ba (cry8Ba).